Here is a 1135-residue protein sequence, read N- to C-terminus: Large proline-rich protein bag6-A (1135 aa).

Positions 7 to 82 constitute a Ubiquitin-like domain; the sequence is MEVTVKTLDS…HLVERAPPQT (76 aa). Disordered regions lie at residues 76–114, 194–238, 350–407, 498–522, 552–612, 661–698, 1075–1099, and 1116–1135; these read ERAPPQTQPSTGGPSTSSSTSPTSSNAAPVPGAPERNGN, EQAA…SPSE, TGNG…PHPR, SFQFQPGTATTPPGPGGATTTVPGA, QGGS…QHLS, PVSTAPTQSASQAPPPSSPPPPPAHSSPPPAAAPESLP, KATGAKPESSAECVRRELDNSEAQG, and NESYSAQRFPNTQRAFRGDP. The segment covering 79–100 has biased composition (low complexity); sequence PPQTQPSTGGPSTSSSTSPTSS. Positions 212-227 are enriched in polar residues; sequence RETLPQTTQNTDGQSN. The segment covering 228 to 237 has biased composition (low complexity); that stretch reads TTPTSHPSPS. Residues 367-387 are compositionally biased toward polar residues; the sequence is QPPSTNTSEPQRPNTENQPPS. Composition is skewed to low complexity over residues 555–600 and 663–672; these read SSTS…SVPS and STAPTQSASQ. Positions 673–692 are enriched in pro residues; sequence APPPSSPPPPPAHSSPPPAA. Basic and acidic residues predominate over residues 1087-1099; sequence CVRRELDNSEAQG. The span at 1116–1129 shows a compositional bias: polar residues; sequence NESYSAQRFPNTQR.

Component of the bag6/bat3 complex.

It localises to the cytoplasm. It is found in the cytosol. The protein localises to the nucleus. The protein resides in the secreted. Its subcellular location is the extracellular exosome. In terms of biological role, ATP-independent molecular chaperone preventing the aggregation of misfolded and hydrophobic patches-containing proteins. Functions as part of a cytosolic protein quality control complex, the bag6/bat3 complex, which maintains these client proteins in a soluble state and participates in their proper delivery to the endoplasmic reticulum or alternatively can promote their sorting to the proteasome where they undergo degradation. The bag6/bat3 complex is involved in the post-translational delivery of tail-anchored/type II transmembrane proteins to the endoplasmic reticulum membrane. Similarly, the bag6/bat3 complex also functions as a sorting platform for proteins of the secretory pathway that are mislocalized to the cytosol either delivering them to the proteasome for degradation or to the endoplasmic reticulum. The bag6/bat3 complex also plays a role in the endoplasmic reticulum-associated degradation (ERAD), a quality control mechanism that eliminates unwanted proteins of the endoplasmic reticulum through their retrotranslocation to the cytosol and their targeting to the proteasome. It maintains these retrotranslocated proteins in an unfolded yet soluble state condition in the cytosol to ensure their proper delivery to the proteasome. Also required for selective ubiquitin-mediated degradation of defective nascent chain polypeptides by the proteasome. Also involved in endoplasmic reticulum stress-induced pre-emptive quality control, a mechanism that selectively attenuates the translocation of newly synthesized proteins into the endoplasmic reticulum and reroutes them to the cytosol for proteasomal degradation. May ensure the proper degradation of these proteins and thereby protects the endoplasmic reticulum from protein overload upon stress. By stabilizing a large spectrum of proteins, may indirectly affect different biological processes including apoptosis. By controlling the steady-state expression of the IGF1R receptor, indirectly regulates the insulin-like growth factor receptor signaling pathway. When nuclear, may also act as a component of some chromatin regulator complex. The protein is Large proline-rich protein bag6-A of Xenopus laevis (African clawed frog).